The primary structure comprises 94 residues: Mitochondrial import inner membrane translocase subunit Tim8 A (94 aa).

The Twin CX3C motif motif lies at 47–70 (CWDKCIDRPGNKLDSRTESCLVSC). Cystine bridges form between C47/C70 and C51/C66.

It belongs to the small Tim family. As to quaternary structure, heterohexamer; composed of 3 copies of TIMM8A and 3 copies of TIMM13, named soluble 70 kDa complex. Associates with the TIM22 complex, whose core is composed of TIMM22.

Its subcellular location is the mitochondrion inner membrane. In terms of biological role, mitochondrial intermembrane chaperone that participates in the import and insertion of some multi-pass transmembrane proteins into the mitochondrial inner membrane. Also required for the transfer of beta-barrel precursors from the TOM complex to the sorting and assembly machinery (SAM complex) of the outer membrane. Acts as a chaperone-like protein that protects the hydrophobic precursors from aggregation and guide them through the mitochondrial intermembrane space. The TIMM8-TIMM13 complex mediates the import of some proteins while the predominant TIMM9-TIMM10 70 kDa complex mediates the import of much more proteins. The sequence is that of Mitochondrial import inner membrane translocase subunit Tim8 A (timm8a) from Xenopus laevis (African clawed frog).